Reading from the N-terminus, the 486-residue chain is Membrane-bound lytic murein transglycosylase F (486 aa).

A signal peptide spans 1–29; it reads MFSPTALRPRYAKWLIATGLFLMLSGCVD. The tract at residues 30 to 267 is non-LT domain; sequence KPNTLERVKE…RLKDRYYGHV (238 aa). Positions 268–486 are LT domain; that stretch reads DVLGYMGATT…SKPAQEPAPL (219 aa). Glutamate 314 is a catalytic residue.

In the N-terminal section; belongs to the bacterial solute-binding protein 3 family. The protein in the C-terminal section; belongs to the transglycosylase Slt family.

Its subcellular location is the cell outer membrane. The enzyme catalyses Exolytic cleavage of the (1-&gt;4)-beta-glycosidic linkage between N-acetylmuramic acid (MurNAc) and N-acetylglucosamine (GlcNAc) residues in peptidoglycan, from either the reducing or the non-reducing ends of the peptidoglycan chains, with concomitant formation of a 1,6-anhydrobond in the MurNAc residue.. Functionally, murein-degrading enzyme that degrades murein glycan strands and insoluble, high-molecular weight murein sacculi, with the concomitant formation of a 1,6-anhydromuramoyl product. Lytic transglycosylases (LTs) play an integral role in the metabolism of the peptidoglycan (PG) sacculus. Their lytic action creates space within the PG sacculus to allow for its expansion as well as for the insertion of various structures such as secretion systems and flagella. This chain is Membrane-bound lytic murein transglycosylase F, found in Pseudomonas fluorescens (strain Pf0-1).